A 370-amino-acid chain; its full sequence is Mitogen-activated protein kinase mpkC (370 aa).

Residues 19-298 (YANVRPVGLG…AAESLEHPYL (280 aa)) enclose the Protein kinase domain. Residues 25-33 (VGLGAFGLV) and Lys48 contribute to the ATP site. Asp140 serves as the catalytic Proton acceptor. Position 170 is a phosphothreonine (Thr170). Residues 170-172 (TGY) carry the TXY motif. Residue Tyr172 is modified to Phosphotyrosine.

This sequence belongs to the protein kinase superfamily. Ser/Thr protein kinase family. MAP kinase subfamily. HOG1 sub-subfamily. Mg(2+) serves as cofactor. In terms of processing, dually phosphorylated on Thr-170 and Tyr-172, which activates the enzyme.

The catalysed reaction is L-seryl-[protein] + ATP = O-phospho-L-seryl-[protein] + ADP + H(+). The enzyme catalyses L-threonyl-[protein] + ATP = O-phospho-L-threonyl-[protein] + ADP + H(+). Its activity is regulated as follows. Activated by tyrosine and threonine phosphorylation. Its function is as follows. Mitogen-activated protein kinase required for growth on media where sorbitol or mannitol is the sole carbon source. In Aspergillus terreus (strain NIH 2624 / FGSC A1156), this protein is Mitogen-activated protein kinase mpkC (mpkC).